A 1040-amino-acid chain; its full sequence is Neprilysin-4 (1040 aa).

The interval 1–27 (MSRHSQLKLAMPSVHGAPATAPGSPMN) is disordered. The interval 1–45 (MSRHSQLKLAMPSVHGAPATAPGSPMNAKARSVKLGLGVNQRTGR) is required for maintaining muscle integrity. Residues 1–55 (MSRHSQLKLAMPSVHGAPATAPGSPMNAKARSVKLGLGVNQRTGRVQWCPGLTCC) lie on the Cytoplasmic side of the membrane. The chain crosses the membrane as a helical; Signal-anchor for type II membrane protein span at residues 56–76 (KMLLLLPVVMLPLTLVLILIM). Residues 77 to 1040 (RLDGMLAALQ…MNPQKKCSVW (964 aa)) lie on the Extracellular side of the membrane. One can recognise a Peptidase M13 domain in the interval 251–1040 (EEGTREGIRM…MNPQKKCSVW (790 aa)). 4 cysteine pairs are disulfide-bonded: Cys277/Cys1025, Cys285/Cys985, Cys452/Cys700, and Cys909/Cys1037. N-linked (GlcNAc...) asparagine glycosylation is found at Asn387, Asn593, Asn723, and Asn819. His872 is a binding site for Zn(2+). Residue Glu873 is part of the active site. His876 lines the Zn(2+) pocket. N-linked (GlcNAc...) asparagine glycosylation is present at Asn916. Glu934 contacts Zn(2+). The active-site Proton donor is the Asp938. Asn969 carries an N-linked (GlcNAc...) asparagine glycan.

Belongs to the peptidase M13 family. In terms of assembly, interacts (via intracellular domain) with the putative carbohydrate kinase CG3534. The cofactor is Zn(2+). As to expression, expressed in the gonads and testes of adults, and the adult and larval brain (at protein level). In embryos, expressed in the pericardial, muscle founder and glia cells (at protein level). In stage 12 embryos, expressed in specific dorsal muscle founder cells such as DA1 and DO2, and also in the certain pericardial progenitor cells where expression persists throughout embryogenesis. Expressed in the glia cells of the embryonic, larval and adult central nervous system. Expressed in the somatic muscles of larvae, pupae and adults. Isoform A: Detected in the male abdomen (at protein level). Isoform B: Not detected in the male or female abdomen (at protein level).

It is found in the cell membrane. The protein localises to the sarcoplasmic reticulum. The protein resides in the cytoplasm. It catalyses the reaction Preferential cleavage of polypeptides between hydrophobic residues, particularly with Phe or Tyr at P1'.. In terms of biological role, metalloendoprotease which cleaves peptides at the amino side of hydrophobic residues - such as the hormones Akh and Dh31, and the neuropeptides Allatostatins (AST1, AST2, AST3 and AST4), Crz, Drosulfakinins (DSK-I and DSK-II), Lk, sNPF and the tachykinin peptides TK-1, TK-2, TK-4 and TK-5. Functions in female fertility, memory formation and may also act in regulating insulin signaling and food intake. Likely to be involved in controlling feeding behavior and the expression of insulin-like peptides by cleaving various regulatory peptides that include certain Drosulfakinins, Allatostatins and tachykinin peptides. Required in females for normal patterns of egg laying and hatching. Required in the dorsal paired medial neurons for the proper formation of long-term (LTM) and middle-term memories (MTM). Also required in the mushroom body neurons where it functions redundantly with neprilysins Nep2 and Nep3, in normal LTM formation. Cleaves angiotensin-1 and tachykinin neuropeptide substance P. Functions in maintaining muscle integrity, possibly independently of its endopeptidase activity. The protein is Neprilysin-4 of Drosophila melanogaster (Fruit fly).